The chain runs to 1097 residues: Putative regulator of nonsense transcripts 1 (1097 aa).

The span at 42–53 (SQTQTQGHTQSQ) shows a compositional bias: low complexity. The disordered stretch occupies residues 42 to 67 (SQTQTQGHTQSQLDNQLNGPDDGLHN). A Upf1 CH-rich domain is found at 96–254 (TKDLPVHACR…NKLEELWKDN (159 aa)). Zn(2+) is bound by residues Cys-104, Cys-108, Cys-119, Ser-122, Cys-127, His-137, His-141, Cys-147, Cys-165, Cys-168, Cys-191, and Cys-195. The segment at 104-137 (CRSYCGIHDPACVVYCNTSKKWFCNGRGNTSGSH) is C3H. The interval 119–147 (CNTSKKWFCNGRGNTSGSHIVNHLVRAKC) is CC/SHH/C. The C4 stretch occupies residues 165–195 (CYNCGCRNVFLLGFIPAKADSVVVLLCRQPC). Residues Gln-457, 474–481 (GPPGTGKT), Tyr-683, and Glu-813 each bind ATP. Positions 977–998 (QGQTNGPAAGRGAMKGKSGRGG) are disordered.

It belongs to the DNA2/NAM7 helicase family.

The protein resides in the cytoplasm. The protein localises to the P-body. The catalysed reaction is ATP + H2O = ADP + phosphate + H(+). Functionally, RNA-dependent helicase required for nonsense-mediated decay (NMD) of aberrant mRNAs containing premature stop codons and modulates the expression level of normal mRNAs. The formation of an rent1-rent2-rent3 surveillance complex is believed to activate NMD. The chain is Putative regulator of nonsense transcripts 1 (rent1) from Takifugu rubripes (Japanese pufferfish).